We begin with the raw amino-acid sequence, 179 residues long: ATP-dependent protease subunit HslV (179 aa).

Threonine 6 is an active-site residue. Positions 162, 165, and 168 each coordinate Na(+).

This sequence belongs to the peptidase T1B family. HslV subfamily. In terms of assembly, a double ring-shaped homohexamer of HslV is capped on each side by a ring-shaped HslU homohexamer. The assembly of the HslU/HslV complex is dependent on binding of ATP.

The protein localises to the cytoplasm. The enzyme catalyses ATP-dependent cleavage of peptide bonds with broad specificity.. Its activity is regulated as follows. Allosterically activated by HslU binding. Functionally, protease subunit of a proteasome-like degradation complex believed to be a general protein degrading machinery. The chain is ATP-dependent protease subunit HslV from Maridesulfovibrio salexigens (strain ATCC 14822 / DSM 2638 / NCIMB 8403 / VKM B-1763) (Desulfovibrio salexigens).